The primary structure comprises 333 residues: Adenosine deaminase (333 aa).

Residues His12 and His14 each coordinate Zn(2+). 3 residues coordinate substrate: His14, Asp16, and Gly170. Position 197 (His197) interacts with Zn(2+). Glu200 serves as the catalytic Proton donor. Zn(2+) is bound at residue Asp278. Asp279 contacts substrate.

The protein belongs to the metallo-dependent hydrolases superfamily. Adenosine and AMP deaminases family. Adenosine deaminase subfamily. Requires Zn(2+) as cofactor.

The catalysed reaction is adenosine + H2O + H(+) = inosine + NH4(+). The enzyme catalyses 2'-deoxyadenosine + H2O + H(+) = 2'-deoxyinosine + NH4(+). Functionally, catalyzes the hydrolytic deamination of adenosine and 2-deoxyadenosine. The chain is Adenosine deaminase from Shigella sonnei (strain Ss046).